Consider the following 118-residue polypeptide: Non-specific lipid-transfer protein 2 (118 aa).

A signal peptide spans 1 to 25; that stretch reads MAGVMKLACMVLACMIVAGPITANA. Intrachain disulfides connect Cys-29–Cys-76, Cys-39–Cys-53, Cys-54–Cys-100, and Cys-74–Cys-114.

This sequence belongs to the plant LTP family.

Functionally, plant non-specific lipid-transfer proteins transfer phospholipids as well as galactolipids across membranes. May play a role in wax or cutin deposition in the cell walls of expanding epidermal cells and certain secretory tissues. In Arabidopsis thaliana (Mouse-ear cress), this protein is Non-specific lipid-transfer protein 2 (LTP2).